A 147-amino-acid chain; its full sequence is uncharacterized protein (147 aa).

The interval 29–147 (PYGNNSVHQG…GHHHGHHHKH (119 aa)) is disordered. Polar residues-rich tracts occupy residues 34-45 (SVHQGQPHTDQN) and 60-73 (PQAQYGNAGQNQPS). A compositionally biased stretch (gly residues) spans 75 to 92 (PFGGAGYTGPTAGTGFGN). The span at 122–147 (DGHHKKHGRKEHDHHHGHHHGHHHKH) shows a compositional bias: basic residues.

This is an uncharacterized protein from Caenorhabditis elegans.